The following is a 727-amino-acid chain: Prolyl endopeptidase-like (727 aa).

Catalysis depends on charge relay system residues serine 559, aspartate 645, and histidine 690.

It belongs to the peptidase S9A family. Homodimer. Interacts with the AP-1 complex.

It is found in the cytoplasm. The protein resides in the cytosol. It localises to the golgi apparatus. The protein localises to the trans-Golgi network. Its subcellular location is the cytoskeleton. It is found in the nucleus. Serine peptidase whose precise substrate specificity remains unclear. Does not cleave peptides after a arginine or lysine residue. Regulates trans-Golgi network morphology and sorting by regulating the membrane binding of the AP-1 complex. May play a role in the regulation of synaptic vesicle exocytosis. This Macaca fascicularis (Crab-eating macaque) protein is Prolyl endopeptidase-like (PREPL).